A 397-amino-acid polypeptide reads, in one-letter code: tRNA(Ile)-lysidine synthase (397 aa).

44-49 (SGGADS) serves as a coordination point for ATP.

Belongs to the tRNA(Ile)-lysidine synthase family.

The protein resides in the cytoplasm. It catalyses the reaction cytidine(34) in tRNA(Ile2) + L-lysine + ATP = lysidine(34) in tRNA(Ile2) + AMP + diphosphate + H(+). In terms of biological role, ligates lysine onto the cytidine present at position 34 of the AUA codon-specific tRNA(Ile) that contains the anticodon CAU, in an ATP-dependent manner. Cytidine is converted to lysidine, thus changing the amino acid specificity of the tRNA from methionine to isoleucine. This is tRNA(Ile)-lysidine synthase from Rhodopirellula baltica (strain DSM 10527 / NCIMB 13988 / SH1).